Reading from the N-terminus, the 96-residue chain is uncharacterized protein (96 aa).

This is an uncharacterized protein from Saccharomyces cerevisiae (strain ATCC 204508 / S288c) (Baker's yeast).